The following is a 122-amino-acid chain: Large ribosomal subunit protein uL14 (122 aa).

Belongs to the universal ribosomal protein uL14 family. In terms of assembly, part of the 50S ribosomal subunit. Forms a cluster with proteins L3 and L19. In the 70S ribosome, L14 and L19 interact and together make contacts with the 16S rRNA in bridges B5 and B8.

In terms of biological role, binds to 23S rRNA. Forms part of two intersubunit bridges in the 70S ribosome. The protein is Large ribosomal subunit protein uL14 of Cupriavidus taiwanensis (strain DSM 17343 / BCRC 17206 / CCUG 44338 / CIP 107171 / LMG 19424 / R1) (Ralstonia taiwanensis (strain LMG 19424)).